A 134-amino-acid chain; its full sequence is MNTDPAWMADVAFDDNGLIPAIAQDAENGQILMVAWMNREALAETAATGRAVYWSRSRQRLWRKGEESGHTQTVHDLRLDCDGDVVLLKVHQEGGIACHTGRASCFFRRLEGPAGSASWVTVDPVLKDPEHIYK.

Aspartate 80 contributes to the Mg(2+) binding site. Residue cysteine 81 participates in Zn(2+) binding. Aspartate 82 and aspartate 84 together coordinate Mg(2+). Zn(2+) is bound by residues cysteine 98 and cysteine 105.

It belongs to the PRA-CH family. Homodimer. Mg(2+) is required as a cofactor. Zn(2+) serves as cofactor.

The protein localises to the cytoplasm. The catalysed reaction is 1-(5-phospho-beta-D-ribosyl)-5'-AMP + H2O = 1-(5-phospho-beta-D-ribosyl)-5-[(5-phospho-beta-D-ribosylamino)methylideneamino]imidazole-4-carboxamide. It functions in the pathway amino-acid biosynthesis; L-histidine biosynthesis; L-histidine from 5-phospho-alpha-D-ribose 1-diphosphate: step 3/9. In terms of biological role, catalyzes the hydrolysis of the adenine ring of phosphoribosyl-AMP. The sequence is that of Phosphoribosyl-AMP cyclohydrolase from Bordetella petrii (strain ATCC BAA-461 / DSM 12804 / CCUG 43448).